The following is a 490-amino-acid chain: MVPVIALVGRPNVGKSTMFNRLTRTRDAIVGDLSGLTRDRQYGEAKWQGRSYILIDTGGISGDEHGMDEKMAEQSLLAIEEADVVLFLVDARAGYTAADQMIGEHLRKRNKRSYVVANKIDNIDENLARAEFSPMGLGDAIPVAGAHGRGISQMLEIALREFPRDEDEPEEGVEVEEVAEGQEAKRIPGPSEKDGIKIAIIGRPNVGKSTLVNRMLGEDRVIVYDEPGTTRDSIYIPFERNEEKYTLIDTAGVRKRGKIHEEVEKFSVVKTLQAIKDANVVIFVMDAREGVVDHDLNLLGFALEAGRALVIALNKWDGMTPGERDFVKIELERRLFFVDFADIHFISAMHGTGVGNLYQSVQNSFKSAVTRWPTSRLTQILEDAVSEHAPPMVGSRRIKLRYAHLGGANPPLIVIHGNQVEKVPKSYVRYLENTYRRVLKLVGTPIRIEFKGGENPYEGNKNTLTDRQVNKKRRMMSHHKKADKKRRDKR.

EngA-type G domains follow at residues 3 to 166 (PVIA…PRDE) and 196 to 369 (IKIA…KSAV). GTP is bound by residues 9-16 (GRPNVGKS), 56-60 (DTGGI), 118-121 (NKID), 202-209 (GRPNVGKS), 249-253 (DTAGV), and 314-317 (NKWD). Residues 370 to 454 (TRWPTSRLTQ…PIRIEFKGGE (85 aa)) form the KH-like domain. A disordered region spans residues 452–490 (GGENPYEGNKNTLTDRQVNKKRRMMSHHKKADKKRRDKR). Residues 470-490 (NKKRRMMSHHKKADKKRRDKR) show a composition bias toward basic residues.

The protein belongs to the TRAFAC class TrmE-Era-EngA-EngB-Septin-like GTPase superfamily. EngA (Der) GTPase family. In terms of assembly, associates with the 50S ribosomal subunit.

GTPase that plays an essential role in the late steps of ribosome biogenesis. The polypeptide is GTPase Der (Pseudomonas syringae pv. syringae (strain B728a)).